The chain runs to 1014 residues: EMILIN-1-A (1014 aa).

The first 27 residues, 1–27 (MALYFVYLSTLLALILLGDNWAAGTYA), serve as a signal peptide directing secretion. One can recognise an EMI domain in the interval 53–128 (HRNWCAYVVT…HGYSGDDCSD (76 aa)). Disulfide bonds link cysteine 57-cysteine 118, cysteine 84-cysteine 89, and cysteine 117-cysteine 126. Disordered stretches follow at residues 125–150 (DCSD…SDSD) and 811–869 (QDFT…ANVP). The segment covering 134–150 (HDSRARPTGEEGRSDSD) has biased composition (basic and acidic residues). The stretch at 145 to 179 (GRSDSDRIRQLEEQIQSLNKNLHNLQKKIYEESQR) forms a coiled coil. Residues 815 to 865 (GPPGLPGPQGEKGSKGPPGPRGPLGKEGPQGRVGPVGPPGLRGEQGPPGKD) form the Collagen-like domain. Positions 840–856 (KEGPQGRVGPVGPPGLR) are enriched in low complexity. Residues 866–1012 (ANVPRLSFSA…GMLLYEESED (147 aa)) enclose the C1q domain.

The protein localises to the secreted. The protein resides in the extracellular space. It localises to the extracellular matrix. In terms of biological role, may be responsible for anchoring smooth muscle cells to elastic fibers, and may be involved not only in the formation of the elastic fiber, but also in the processes that regulate vessel assembly. Has cell adhesive capacity. In Danio rerio (Zebrafish), this protein is EMILIN-1-A.